The chain runs to 333 residues: Probable tRNA pseudouridine synthase B (333 aa).

Catalysis depends on D66, which acts as the Nucleophile. Residues 233 to 308 (LKKIIIKDSA…EVVEITRVIM (76 aa)) form the PUA domain.

Belongs to the pseudouridine synthase TruB family. Type 2 subfamily.

The catalysed reaction is uridine(55) in tRNA = pseudouridine(55) in tRNA. Its function is as follows. Could be responsible for synthesis of pseudouridine from uracil-55 in the psi GC loop of transfer RNAs. The sequence is that of Probable tRNA pseudouridine synthase B from Methanococcus maripaludis (strain DSM 14266 / JCM 13030 / NBRC 101832 / S2 / LL).